A 1088-amino-acid chain; its full sequence is RNA-directed RNA polymerase (1088 aa).

Residues Leu501–Ile687 enclose the RdRp catalytic domain.

The protein belongs to the reoviridae RNA-directed RNA polymerase family. As to quaternary structure, interacts with VP3 (Potential). Interacts with VP2; this interaction activates VP1. Interacts with NSP5; this interaction is probably necessary for the formation of functional virus factories. Interacts with NSP2; this interaction is weak. Mg(2+) serves as cofactor.

It localises to the virion. It catalyses the reaction RNA(n) + a ribonucleoside 5'-triphosphate = RNA(n+1) + diphosphate. Functionally, RNA-directed RNA polymerase that is involved in both transcription and genome replication. Together with VP3 capping enzyme, forms an enzyme complex positioned near the channels situated at each of the five-fold vertices of the core. Following infection, the outermost layer of the virus is lost, leaving a double-layered particle (DLP) made up of the core and VP6 shell. VP1 then catalyzes the transcription of fully conservative plus-strand genomic RNAs that are extruded through the DLP's channels into the cytoplasm where they function as mRNAs for translation of viral proteins. One copy of each of the viral (+)RNAs is also recruited during core assembly, together with newly synthesized polymerase complexes and VP2. The polymerase of these novo-formed particles catalyzes the synthesis of complementary minus-strands leading to dsRNA formation. To do so, the polymerase specifically recognizes and binds 4 bases 5'-UGUG-3' in the conserved 3'-sequence of plus-strand RNA templates. VP2 presumably activates the autoinhibited VP1-RNA complex to coordinate packaging and genome replication. Once dsRNA synthesis is complete, the polymerase switches to the transcriptional mode, thus providing secondary transcription. This Homo sapiens (Human) protein is RNA-directed RNA polymerase.